A 716-amino-acid chain; its full sequence is Polyribonucleotide nucleotidyltransferase (716 aa).

The Mg(2+) site is built by aspartate 495 and aspartate 501. Residues proline 562–isoleucine 621 form the KH domain. Residues glycine 631 to lysine 699 enclose the S1 motif domain.

Belongs to the polyribonucleotide nucleotidyltransferase family. Requires Mg(2+) as cofactor.

The protein resides in the cytoplasm. The catalysed reaction is RNA(n+1) + phosphate = RNA(n) + a ribonucleoside 5'-diphosphate. Involved in mRNA degradation. Catalyzes the phosphorolysis of single-stranded polyribonucleotides processively in the 3'- to 5'-direction. The protein is Polyribonucleotide nucleotidyltransferase of Synechococcus elongatus (strain ATCC 33912 / PCC 7942 / FACHB-805) (Anacystis nidulans R2).